The chain runs to 301 residues: Cytosolic sulfotransferase 2 (301 aa).

53 to 58 (KAGTTW) is a binding site for 3'-phosphoadenylyl sulfate. H115 functions as the Proton acceptor in the catalytic mechanism. Residues R137, S145, Y201, 235–240 (VQFDVM), and 263–265 (RKG) contribute to the 3'-phosphoadenylyl sulfate site.

It belongs to the sulfotransferase 1 family. Expressed in liver.

It localises to the cytoplasm. Inhibited by Co(2+), Zn(2+), Cd(2+) and Pb(2+) ions. Inactivated by Hg(2+) and Cu(2+) ions. Sulfotransferase that utilizes 3'-phospho-5'-adenylyl sulfate (PAPS) as sulfonate donor to catalyze the sulfate conjugation of a variety of xenobiotic and endogenous compounds, including 2-naphthol, hydroxychlorobiphenyls, T3 (triiodo-L-thyronine), T4 (thyroxine), estrone and DOPA. This is Cytosolic sulfotransferase 2 from Danio rerio (Zebrafish).